Here is a 207-residue protein sequence, read N- to C-terminus: MLNKLSRLLADAGISLTDHQKTLLVAYVDMLHKWNKAYNLTSVRDPNEMLVRHILDSIVVAPYLQGQRFIDVGTGPGLPGIPLAIVLPDAHFTLLDSLGKRVRFLRQVQHELKLENITPVQSRVEAYPSEPPFDGVISRAFASLNDMVSWCHHLPGEKGRFYALKGQLPGDEIASLPDNFSVESVEKLRVPQLEGERHLVIIKSNKV.

S-adenosyl-L-methionine contacts are provided by residues Gly73, Leu78, 124–125 (VE), and Arg139.

The protein belongs to the methyltransferase superfamily. RNA methyltransferase RsmG family.

Its subcellular location is the cytoplasm. It carries out the reaction guanosine(527) in 16S rRNA + S-adenosyl-L-methionine = N(7)-methylguanosine(527) in 16S rRNA + S-adenosyl-L-homocysteine. Its function is as follows. Specifically methylates the N7 position of guanine in position 527 of 16S rRNA. This Salmonella choleraesuis (strain SC-B67) protein is Ribosomal RNA small subunit methyltransferase G.